The following is a 371-amino-acid chain: Glutamate 5-kinase (371 aa).

ATP is bound at residue K10. 3 residues coordinate substrate: S50, D137, and N149. ATP is bound by residues 169-170 (SD) and 208-214 (TGGMYTK). The region spanning 274-352 (QGKVYIDDGA…EEIKNILGED (79 aa)) is the PUA domain.

The protein belongs to the glutamate 5-kinase family.

The protein resides in the cytoplasm. It catalyses the reaction L-glutamate + ATP = L-glutamyl 5-phosphate + ADP. Its pathway is amino-acid biosynthesis; L-proline biosynthesis; L-glutamate 5-semialdehyde from L-glutamate: step 1/2. In terms of biological role, catalyzes the transfer of a phosphate group to glutamate to form L-glutamate 5-phosphate. In Dictyoglomus thermophilum (strain ATCC 35947 / DSM 3960 / H-6-12), this protein is Glutamate 5-kinase.